The sequence spans 529 residues: Delayed-rectifier potassium channel regulatory subunit KCNS1 (529 aa).

Topologically, residues Met-1 to Leu-217 are cytoplasmic. The chain crosses the membrane as a helical span at residues Pro-218–Ile-239. Residues His-240–Pro-270 are Extracellular-facing. Residues Val-271 to Leu-293 traverse the membrane as a helical segment. Topologically, residues Ala-294–Pro-304 are cytoplasmic. A helical membrane pass occupies residues Leu-305–Ala-322. Over Gly-323 to Leu-340 the chain is Extracellular. A helical; Voltage-sensor membrane pass occupies residues Gly-341–His-361. Residues Ser-362–Tyr-376 are Cytoplasmic-facing. The chain crosses the membrane as a helical span at residues Arg-377–Tyr-398. Residues Thr-399–Ile-411 lie on the Extracellular side of the membrane. The helical intramembrane region spans Pro-412 to Thr-423. The short motif at Thr-424–Asp-429 is the Selectivity filter element. An intramembrane segment occupies Thr-424–Val-431. Over Pro-432–Lys-438 the chain is Extracellular. Residues Leu-439–Tyr-467 form a helical membrane-spanning segment. Residues Arg-468–Tyr-529 are Cytoplasmic-facing. The segment at Gly-494–Tyr-529 is disordered. Positions Thr-502–Asp-514 are enriched in basic and acidic residues.

This sequence belongs to the potassium channel family. S (TC 1.A.1.2) subfamily. Kv9.1/KCNS1 sub-subfamily. Heterotetramer with KCNB1. Heterotetramer with KCNB2. Does not form homomultimers.

Its subcellular location is the cell membrane. Its function is as follows. Potassium channel regulatory subunit that modulate the delayed rectifier voltage-gated potassium channel activity of KCNB1 and KCNB2 by altering their kinetics, expression levels, and shifting the half-inactivation potential to more polarized values. While it does not form functional channels on its own, it can form functional heterotetrameric channels with KCNB1 and KCNB2. Each regulatory subunit has unique regulatory properties that can lead to extensive inhibition, significant changes in kinetics, and/or substantial shifts in the voltage dependencies of the inactivation process. This is Delayed-rectifier potassium channel regulatory subunit KCNS1 from Chlorocebus aethiops (Green monkey).